The sequence spans 247 residues: Cytochrome c oxidase subunit 2 (247 aa).

The Mitochondrial intermembrane portion of the chain corresponds to 1 to 38; it reads MREMMMNNMLNDVPTPWAMYFQDSATPNMEGMMELHNN. The chain crosses the membrane as a helical span at residues 39–55; it reads VLFYLCVMLGFVTYMLY. Residues 56 to 86 are Mitochondrial matrix-facing; that stretch reads NVMTVYNKSAMAYKYMNHGQFMEMMWTTFPA. The chain crosses the membrane as a helical span at residues 87–103; the sequence is MMLLMMAFPSFMLLYMC. At 104 to 247 the chain is on the mitochondrial intermembrane side; that stretch reads DEVMAPAMTI…VDFLAWIDEQ (144 aa). His-182, Cys-217, Glu-219, Cys-221, His-225, and Met-228 together coordinate Cu cation. Glu-219 lines the Mg(2+) pocket.

Belongs to the cytochrome c oxidase subunit 2 family. As to quaternary structure, component of the cytochrome c oxidase (complex IV, CIV), a multisubunit enzyme composed of a catalytic core of 3 subunits and several supernumerary subunits. The complex exists as a monomer or a dimer and forms supercomplexes (SCs) in the inner mitochondrial membrane with ubiquinol-cytochrome c oxidoreductase (cytochrome b-c1 complex, complex III, CIII). It depends on Cu cation as a cofactor.

It localises to the mitochondrion inner membrane. It carries out the reaction 4 Fe(II)-[cytochrome c] + O2 + 8 H(+)(in) = 4 Fe(III)-[cytochrome c] + 2 H2O + 4 H(+)(out). Functionally, component of the cytochrome c oxidase, the last enzyme in the mitochondrial electron transport chain which drives oxidative phosphorylation. The respiratory chain contains 3 multisubunit complexes succinate dehydrogenase (complex II, CII), ubiquinol-cytochrome c oxidoreductase (cytochrome b-c1 complex, complex III, CIII) and cytochrome c oxidase (complex IV, CIV), that cooperate to transfer electrons derived from NADH and succinate to molecular oxygen, creating an electrochemical gradient over the inner membrane that drives transmembrane transport and the ATP synthase. Cytochrome c oxidase is the component of the respiratory chain that catalyzes the reduction of oxygen to water. Electrons originating from reduced cytochrome c in the intermembrane space (IMS) are transferred via the dinuclear copper A center (CU(A)) of subunit 2 and heme A of subunit 1 to the active site in subunit 1, a binuclear center (BNC) formed by heme A3 and copper B (CU(B)). The BNC reduces molecular oxygen to 2 water molecules using 4 electrons from cytochrome c in the IMS and 4 protons from the mitochondrial matrix. The protein is Cytochrome c oxidase subunit 2 (COX2) of Eeniella nana (Yeast).